A 175-amino-acid polypeptide reads, in one-letter code: Putative adenylate cyclase MJ0240 (175 aa).

A CYTH domain is found at 1–175 (MIEVEIKVKI…RKSYLELRGL (175 aa)). The Proton acceptor role is filled by Tyr-37.

It belongs to the adenylyl cyclase CyaB family.

Its subcellular location is the cytoplasm. It catalyses the reaction ATP = 3',5'-cyclic AMP + diphosphate. Its function is as follows. Could catalyze the biosynthesis of cyclic AMP (cAMP) from ATP. In Methanocaldococcus jannaschii (strain ATCC 43067 / DSM 2661 / JAL-1 / JCM 10045 / NBRC 100440) (Methanococcus jannaschii), this protein is Putative adenylate cyclase MJ0240.